A 389-amino-acid chain; its full sequence is Succinate--CoA ligase [ADP-forming] subunit beta (389 aa).

The ATP-grasp domain occupies 9–236 (KELFAKHGVP…RDATDPLELK (228 aa)). ATP is bound by residues Lys-45, 52–54 (GRG), Ser-94, and Glu-99. Mg(2+) is bound by residues Asn-191 and Asp-205. Residues Asn-256 and 318 to 320 (GIT) each bind substrate.

The protein belongs to the succinate/malate CoA ligase beta subunit family. Heterotetramer of two alpha and two beta subunits. Requires Mg(2+) as cofactor.

It carries out the reaction succinate + ATP + CoA = succinyl-CoA + ADP + phosphate. It catalyses the reaction GTP + succinate + CoA = succinyl-CoA + GDP + phosphate. Its pathway is carbohydrate metabolism; tricarboxylic acid cycle; succinate from succinyl-CoA (ligase route): step 1/1. Its function is as follows. Succinyl-CoA synthetase functions in the citric acid cycle (TCA), coupling the hydrolysis of succinyl-CoA to the synthesis of either ATP or GTP and thus represents the only step of substrate-level phosphorylation in the TCA. The beta subunit provides nucleotide specificity of the enzyme and binds the substrate succinate, while the binding sites for coenzyme A and phosphate are found in the alpha subunit. The sequence is that of Succinate--CoA ligase [ADP-forming] subunit beta from Rhodococcus erythropolis (strain PR4 / NBRC 100887).